Consider the following 150-residue polypeptide: Large ribosomal subunit protein bL9 (150 aa).

Belongs to the bacterial ribosomal protein bL9 family.

Its function is as follows. Binds to the 23S rRNA. The sequence is that of Large ribosomal subunit protein bL9 from Pectobacterium atrosepticum (strain SCRI 1043 / ATCC BAA-672) (Erwinia carotovora subsp. atroseptica).